The following is a 260-amino-acid chain: Ribonuclease HII (260 aa).

In terms of domain architecture, RNase H type-2 spans 71 to 259 (RRIAGIDEAG…VREVLKASEQ (189 aa)). 3 residues coordinate a divalent metal cation: D77, E78, and D169.

It belongs to the RNase HII family. Mn(2+) is required as a cofactor. It depends on Mg(2+) as a cofactor.

The protein localises to the cytoplasm. It catalyses the reaction Endonucleolytic cleavage to 5'-phosphomonoester.. Endonuclease that specifically degrades the RNA of RNA-DNA hybrids. This Geobacillus kaustophilus (strain HTA426) protein is Ribonuclease HII.